The sequence spans 199 residues: 7-methyl-GTP pyrophosphatase (199 aa).

Catalysis depends on D72, which acts as the Proton acceptor.

Belongs to the Maf family. YceF subfamily. It depends on a divalent metal cation as a cofactor.

It is found in the cytoplasm. The enzyme catalyses N(7)-methyl-GTP + H2O = N(7)-methyl-GMP + diphosphate + H(+). Nucleoside triphosphate pyrophosphatase that hydrolyzes 7-methyl-GTP (m(7)GTP). May have a dual role in cell division arrest and in preventing the incorporation of modified nucleotides into cellular nucleic acids. The sequence is that of 7-methyl-GTP pyrophosphatase from Alkalilimnicola ehrlichii (strain ATCC BAA-1101 / DSM 17681 / MLHE-1).